The following is a 440-amino-acid chain: MDLTNWWQGATQWFGRSSQKSLEQAFRSALKIKEIEDQYFQGKKIGPENCDYSADTVTYFANQIQRHLRKIEQEIYHLNSDQEFVKILSLDPAVKQDPQTEYVLNQLQFIDDILQRYDGELPQVSPPKQIANGGVLDLPAITANKQRQINKKRRDGFQYIRREDTQQKVDTATQKSGVLPRSFLRTIDRLKREMDPQSSDTEQKVLKQYRNSRYKTALSIKFVLTLIIVPLLAHQLTKTFFLLPSVESFFERNSEVVFINQSMETEAYEELSHFEESLRFRELLGFGEKLSPEAKEEKLAEKAKEISESYRRVSTNAIANIFADIFSLVAFSLVLVNSQREIEVLKEFIDEIVYGLSDSAKAFLIILFTDMFVGFHSPHGWEVILASIARHFGLPENQDFNFLFIATFPVILDTVFKYWIFRYLNSISPSAVATYRNMNE.

The next 4 membrane-spanning stretches (helical) occupy residues 222–242 (FVLT…TFFL), 316–336 (NAIA…LVLV), 352–374 (IVYG…MFVG), and 400–420 (FNFL…KYWI).

The protein belongs to the CemA family.

It localises to the cell inner membrane. Functionally, required for H(+) efflux immediately after light irradiation to form a rapid H(+) concentration gradient across the thylakoid membranes. Together with PxcL, contributes to transient H(+) uptake following dark to light transition. Involved in light-induced Na(+)-dependent proton extrusion. Also seems to be involved in CO(2) transport. The polypeptide is Proton extrusion protein PxcA (Synechocystis sp. (strain ATCC 27184 / PCC 6803 / Kazusa)).